A 153-amino-acid polypeptide reads, in one-letter code: Ribosomal RNA large subunit methyltransferase H (153 aa).

S-adenosyl-L-methionine contacts are provided by residues Leu70, Gly102, and 121 to 126; that span reads FSKMTF.

This sequence belongs to the RNA methyltransferase RlmH family. Homodimer.

It localises to the cytoplasm. It catalyses the reaction pseudouridine(1915) in 23S rRNA + S-adenosyl-L-methionine = N(3)-methylpseudouridine(1915) in 23S rRNA + S-adenosyl-L-homocysteine + H(+). Its function is as follows. Specifically methylates the pseudouridine at position 1915 (m3Psi1915) in 23S rRNA. This is Ribosomal RNA large subunit methyltransferase H from Desulfotalea psychrophila (strain LSv54 / DSM 12343).